The following is a 77-amino-acid chain: Putative snRNP Sm-like protein (77 aa).

Residues 8–77 form the Sm domain; sequence PTLRMMLDYV…DSVVVITPAA (70 aa).

The protein belongs to the snRNP Sm proteins family.

The chain is Putative snRNP Sm-like protein from Aeropyrum pernix (strain ATCC 700893 / DSM 11879 / JCM 9820 / NBRC 100138 / K1).